Consider the following 155-residue polypeptide: Xanthine-guanine phosphoribosyltransferase (155 aa).

Residues 37-38 (RG) and 91-99 (DDLVDTGNT) contribute to the 5-phospho-alpha-D-ribose 1-diphosphate site. Mg(2+) is bound at residue D92. Residues D95 and I138 each contribute to the guanine site. 2 residues coordinate xanthine: D95 and I138. Residues 95–99 (DTGNT) and 137–138 (WI) each bind GMP.

The protein belongs to the purine/pyrimidine phosphoribosyltransferase family. XGPT subfamily. In terms of assembly, homotetramer. Mg(2+) serves as cofactor.

It is found in the cell inner membrane. The catalysed reaction is GMP + diphosphate = guanine + 5-phospho-alpha-D-ribose 1-diphosphate. The enzyme catalyses XMP + diphosphate = xanthine + 5-phospho-alpha-D-ribose 1-diphosphate. It carries out the reaction IMP + diphosphate = hypoxanthine + 5-phospho-alpha-D-ribose 1-diphosphate. It functions in the pathway purine metabolism; GMP biosynthesis via salvage pathway; GMP from guanine: step 1/1. It participates in purine metabolism; XMP biosynthesis via salvage pathway; XMP from xanthine: step 1/1. Its function is as follows. Acts on guanine, xanthine and to a lesser extent hypoxanthine. Purine salvage pathway enzyme that catalyzes the transfer of the ribosyl-5-phosphate group from 5-phospho-alpha-D-ribose 1-diphosphate (PRPP) to the N9 position of the 6-oxopurines guanine and xanthine to form the corresponding ribonucleotides GMP (guanosine 5'-monophosphate) and XMP (xanthosine 5'-monophosphate), with the release of PPi. To a lesser extent, also acts on hypoxanthine. This chain is Xanthine-guanine phosphoribosyltransferase, found in Haemophilus influenzae (strain ATCC 51907 / DSM 11121 / KW20 / Rd).